The following is a 202-amino-acid chain: Helix-loop-helix protein 10 (202 aa).

Disordered regions lie at residues 1–26 and 83–112; these read MESS…NSEL and QNKS…GKID. Residues 17–26 are compositionally biased toward polar residues; it reads STGNHGNSEL. The tract at residues 121-134 is basic motif; it reads TRRYEANARERNRV. Residues 121-172 enclose the bHLH domain; the sequence is TRRYEANARERNRVQQLSKMFDQLRVCLPIEDDAKISKLATLKVASSYIGYL. Residues 135–172 form a helix-loop-helix motif region; it reads QQLSKMFDQLRVCLPIEDDAKISKLATLKVASSYIGYL.

In terms of assembly, heterodimer with hlh-2. Expressed in intestine, neurons in head, body and tail, and in body hypodermis, and vulva. Expressed in neurons in the male-specific genital sensilla (simple sense organs) known as rays.

It is found in the nucleus. Its subcellular location is the cytoplasm. Its function is as follows. Probable transcription factor which binds the E box motif 5'-CA[TC][AG]TG-3'. In Caenorhabditis elegans, this protein is Helix-loop-helix protein 10.